Reading from the N-terminus, the 434-residue chain is Enolase A (434 aa).

Substrate contacts are provided by His-160 and Glu-169. Glu-212 functions as the Proton donor in the catalytic mechanism. Mg(2+) is bound by residues Asp-247, Glu-296, and Asp-321. Substrate is bound by residues Glu-296 and Asp-321. Lys-346 acts as the Proton acceptor in catalysis. Substrate is bound by residues 373 to 376 and Lys-397; that span reads SHRS.

The protein belongs to the enolase family. As to quaternary structure, homodimer. The cofactor is Mg(2+).

The protein resides in the cytoplasm. It catalyses the reaction (2R)-2-phosphoglycerate = phosphoenolpyruvate + H2O. It participates in carbohydrate degradation; glycolysis; pyruvate from D-glyceraldehyde 3-phosphate: step 4/5. In Dictyostelium discoideum (Social amoeba), this protein is Enolase A (enoA).